Here is a 739-residue protein sequence, read N- to C-terminus: Ankyrin repeat and SAM domain-containing protein 6 (739 aa).

ANK repeat units follow at residues 1–30, 57–86, 91–120, 124–156, 158–188, 192–221, 226–255, and 259–290; these read MGAS…FVDD, LEVR…DARV, TGWS…DPDH, LGNT…RPDD, KKRP…QVDV, DGAS…DVDR, HGWT…DVQL, and NGYT…LVDK. Basic residues predominate over residues 295–305; sequence QRGKSALRRRA. Disordered regions lie at residues 295 to 320 and 449 to 645; these read QRGK…TGLK and LRDA…ITDE. Residues 462 to 478 show a composition bias toward polar residues; it reads PGRSSAGSDTASISRVV. Composition is skewed to low complexity over residues 490-506 and 582-592; these read GPSP…HSSG and SSRSKSTSPTL. A compositionally biased stretch (pro residues) spans 593–603; it reads TPSPSPTPAHT. A compositionally biased stretch (low complexity) spans 604–641; it reads PAPAHTPAHRPTGASADSQGSASTQQRSRSSGGSSSGT. The 64-residue stretch at 643 to 706 folds into the SAM domain; it reads TDEDELSGIL…LAAISELNAG (64 aa).

It localises to the cell projection. It is found in the cilium. Required for renal function. The polypeptide is Ankyrin repeat and SAM domain-containing protein 6 (anks6) (Danio rerio (Zebrafish)).